Consider the following 416-residue polypeptide: MTDMRRLGQRAKQASLLIAPLSTQIKNRFLSTLAKVLVDDTQTLLAANQKDLANAKEHGISDIMMDRLRLTSERIKAIAQGVQQVADLADPIGQVIKGYTNLNGLKILQKRVPLGVIAMIFESRPNVSVDAFSLAFKTNNAIILRGGKDALYSNKALVKLIRQSLEESGITPDAVQLVEDPSHAVAEELMQATDYVDVLIPRGGARLIQTVKEKAKVPVIETGVGNVHIYVDAQADLDMATKIVINAKTKRPSVCNAAEGLVIHEAVAARFIPMLEKAINQVQPVEWRADDKALPLFEQAVPAKAEDFETEFLDYIMSVKVVSSLEEAISWINQHTSHHSEAIITRDIKAAETFQDLVDAAAVYVNASTRFTDGFVFGLGAEIGISTQKMHARGPMGLEALTSTKFYINGDGHIRE.

Belongs to the gamma-glutamyl phosphate reductase family.

It is found in the cytoplasm. The enzyme catalyses L-glutamate 5-semialdehyde + phosphate + NADP(+) = L-glutamyl 5-phosphate + NADPH + H(+). The protein operates within amino-acid biosynthesis; L-proline biosynthesis; L-glutamate 5-semialdehyde from L-glutamate: step 2/2. Functionally, catalyzes the NADPH-dependent reduction of L-glutamate 5-phosphate into L-glutamate 5-semialdehyde and phosphate. The product spontaneously undergoes cyclization to form 1-pyrroline-5-carboxylate. This is Gamma-glutamyl phosphate reductase from Streptococcus pyogenes serotype M4 (strain MGAS10750).